Reading from the N-terminus, the 236-residue chain is MSKVCAVFGGSRGIGKAVAKLLAQKDYKVAVISRNLEVAQAAVTEIGAHLALSCDVSKENEIQCTFKEIKNNLGNIDYLVNSAGISRDALLLRTRSEDIMSLLSINLVGTIQTCKVALKGMIQQQGGSIVNIGSIVGHKGNIGQSIYGASKEGLIGFSKSLAKEVAKRNIRVNVVAPGFIRTDMTSDLKEDSLNKMIPLGRFGEPEEVAQSVLFLLESPYITGHVLVVDGGLQLHL.

Residues S11–I14, R34–N35, D55, and S82–G84 contribute to the NADP(+) site. S134 serves as a coordination point for substrate. Residues Y147, K151, and I180–T182 each bind NADP(+). The active-site Proton acceptor is Y147.

It belongs to the short-chain dehydrogenases/reductases (SDR) family. As to quaternary structure, homotetramer (in vitro). Heterotetramer with HSD17B8; contains two molecules each of HSD17B8 and CBR4.

It is found in the mitochondrion matrix. It functions in the pathway lipid metabolism; fatty acid biosynthesis. The heterotetramer with HSD17B8 has NADH-dependent 3-ketoacyl-acyl carrier protein reductase activity, and thereby plays a role in mitochondrial fatty acid biosynthesis. Within the heterotetramer, HSD17B8 binds NADH; CBR4 binds NADPD. The homotetramer has NADPH-dependent quinone reductase activity. Both homotetramer and the heterotetramer have broad in vitro substrate specificity and can reduce 9,10-phenanthrenequinone, 1,4-benzoquinone and various other o-quinones and p-quinones. The chain is Carbonyl reductase family member 4 (cbr4) from Xenopus laevis (African clawed frog).